Consider the following 154-residue polypeptide: Periplasmic nitrate reductase, electron transfer subunit (154 aa).

The N-terminal stretch at 1-24 (MSMHPALRLLATVLVALGAGPAFT) is a signal peptide. The segment at 27-47 (APRLTGADRPMSEVAAPPLPE) is disordered. Heme c contacts are provided by His-68, Cys-82, Cys-85, His-86, His-103, Cys-122, Cys-125, and His-126.

Belongs to the NapB family. Component of the periplasmic nitrate reductase NapAB complex composed of NapA and NapB. Binds 2 heme C groups per subunit.

It is found in the periplasm. Electron transfer subunit of the periplasmic nitrate reductase complex NapAB. Receives electrons from the membrane-anchored tetraheme c-type NapC protein and transfers these to NapA subunit, thus allowing electron flow between membrane and periplasm. Essential for periplasmic nitrate reduction with nitrate as the terminal electron acceptor. This chain is Periplasmic nitrate reductase, electron transfer subunit, found in Cereibacter sphaeroides (Rhodobacter sphaeroides).